A 184-amino-acid chain; its full sequence is Guanylate kinase (184 aa).

A Guanylate kinase-like domain is found at 5 to 183; the sequence is KKLIILTGPS…TAKRIIKLIQ (179 aa). 12–19 serves as a coordination point for ATP; sequence GPSGVGKG.

This sequence belongs to the guanylate kinase family.

It is found in the cytoplasm. The enzyme catalyses GMP + ATP = GDP + ADP. In terms of biological role, essential for recycling GMP and indirectly, cGMP. The polypeptide is Guanylate kinase (Prochlorococcus marinus (strain MIT 9312)).